Consider the following 1838-residue polypeptide: Type III effector DspE (1838 aa).

Over residues 1 to 12 the composition is skewed to basic and acidic residues; sequence MELKSLGTEHKA. Disordered regions lie at residues 1 to 72, 86 to 163, 182 to 264, 281 to 300, 398 to 418, and 1480 to 1505; these read MELK…AAHQ, KKFS…PTQQ, MAHP…VATP, LEGT…LKGS, DGKS…KTML, and NLAA…SNNR. Low complexity predominate over residues 27–46; the sequence is ALQQGSSSSSPQNAAASLAA. Residues 91-103 show a composition bias toward polar residues; sequence SAPQGQPGTTHSK. Basic and acidic residues predominate over residues 110 to 120; sequence LLARDDGETQH. The span at 407–418 shows a compositional bias: polar residues; sequence GSGTQSHNKTML. The span at 1480-1502 shows a compositional bias: low complexity; sequence NLAAGSRERSTTSGQFGSTTSAS.

Belongs to the AvrE family. In terms of assembly, interacts with the chaperone DspF (DspB/F).

It is found in the secreted. The protein resides in the host cell. Polyamidoamine dendrimers inhibit channel and virulence activities. Major virulence factor that may function as a water- and solute-permeable channel dedicated to creating osmotic/water potential perturbation and a water- and nutrient-rich apoplast in which bacteria multiply within the infected plant tissues. Expression in Xenopus oocytes results in inward and outward currents, permeability to water and osmolarity-dependent oocyte swelling and bursting. Its function is as follows. Acts as a major cell-death inducer during fire blight, a necrotic disease affecting plants of the rosaceous family, and during hypersensitive response (HR) on non-host plants. Essential for pathogenicity on host plants. Contributes quantitatively and in a strain-dependent fashion to HR elicitation in non-host plants such as tobacco. Induces cell death in leaves of apple, a host plant, and tobacco, a non-host plant. Also triggers necrosis in the widely used model, non-host, N.benthamiana and in yeast. Required for the transient multiplication and survival of E.amylovora in non-host A.thaliana leaves. In A.thaliana, triggers electrolyte leakage, activation of defense pathways, reactive oxygen species (ROS) accumulation and cell death. The toxicity of DspE in A.thaliana is associated with an early repression of de novo protein synthesis. This is Type III effector DspE from Erwinia amylovora (Fire blight bacteria).